Consider the following 523-residue polypeptide: Histidine ammonia-lyase (523 aa).

The segment at residues 148–150 (ASG) is a cross-link (5-imidazolinone (Ala-Gly)). Ser-149 bears the 2,3-didehydroalanine (Ser) mark.

Belongs to the PAL/histidase family. In terms of processing, contains an active site 4-methylidene-imidazol-5-one (MIO), which is formed autocatalytically by cyclization and dehydration of residues Ala-Ser-Gly.

The protein resides in the cytoplasm. It carries out the reaction L-histidine = trans-urocanate + NH4(+). The protein operates within amino-acid degradation; L-histidine degradation into L-glutamate; N-formimidoyl-L-glutamate from L-histidine: step 1/3. The sequence is that of Histidine ammonia-lyase from Chloroflexus aurantiacus (strain ATCC 29366 / DSM 635 / J-10-fl).